Consider the following 247-residue polypeptide: ATP synthase subunit a, chloroplastic (247 aa).

The next 5 membrane-spanning stretches (helical) occupy residues 38–58 (QVLITSWVVITILLGSVVIAV), 95–115 (VPFIGTMFLFIFVSNWSGALL), 134–154 (INTTVALALLTSAAYFYAGLS), 199–219 (LVVVVLVSLVPLVVPIPVMFL), and 220–240 (GLFTSGIQALIFATLAAAYIG).

This sequence belongs to the ATPase A chain family. F-type ATPases have 2 components, CF(1) - the catalytic core - and CF(0) - the membrane proton channel. CF(1) has five subunits: alpha(3), beta(3), gamma(1), delta(1), epsilon(1). CF(0) has four main subunits: a, b, b' and c.

It is found in the plastid. The protein localises to the chloroplast thylakoid membrane. Its function is as follows. Key component of the proton channel; it plays a direct role in the translocation of protons across the membrane. This is ATP synthase subunit a, chloroplastic from Agrostis stolonifera (Creeping bentgrass).